Here is a 257-residue protein sequence, read N- to C-terminus: Imidazole glycerol phosphate synthase subunit HisF (257 aa).

Active-site residues include Asp12 and Asp131.

It belongs to the HisA/HisF family. In terms of assembly, heterodimer of HisH and HisF.

Its subcellular location is the cytoplasm. It carries out the reaction 5-[(5-phospho-1-deoxy-D-ribulos-1-ylimino)methylamino]-1-(5-phospho-beta-D-ribosyl)imidazole-4-carboxamide + L-glutamine = D-erythro-1-(imidazol-4-yl)glycerol 3-phosphate + 5-amino-1-(5-phospho-beta-D-ribosyl)imidazole-4-carboxamide + L-glutamate + H(+). It functions in the pathway amino-acid biosynthesis; L-histidine biosynthesis; L-histidine from 5-phospho-alpha-D-ribose 1-diphosphate: step 5/9. IGPS catalyzes the conversion of PRFAR and glutamine to IGP, AICAR and glutamate. The HisF subunit catalyzes the cyclization activity that produces IGP and AICAR from PRFAR using the ammonia provided by the HisH subunit. The protein is Imidazole glycerol phosphate synthase subunit HisF of Rhodococcus jostii (strain RHA1).